The following is a 31-amino-acid chain: Cytochrome b6-f complex subunit 6 (31 aa).

The chain crosses the membrane as a helical span at residues 4–24; it reads ITSYFGFLLAALTITSALFIG.

The protein belongs to the PetL family. In terms of assembly, the 4 large subunits of the cytochrome b6-f complex are cytochrome b6, subunit IV (17 kDa polypeptide, PetD), cytochrome f and the Rieske protein, while the 4 small subunits are PetG, PetL, PetM and PetN. The complex functions as a dimer.

The protein resides in the plastid. The protein localises to the chloroplast thylakoid membrane. Component of the cytochrome b6-f complex, which mediates electron transfer between photosystem II (PSII) and photosystem I (PSI), cyclic electron flow around PSI, and state transitions. PetL is important for photoautotrophic growth as well as for electron transfer efficiency and stability of the cytochrome b6-f complex. This is Cytochrome b6-f complex subunit 6 from Gossypium hirsutum (Upland cotton).